The chain runs to 178 residues: ATP synthase subunit delta (178 aa).

This sequence belongs to the ATPase delta chain family. In terms of assembly, F-type ATPases have 2 components, F(1) - the catalytic core - and F(0) - the membrane proton channel. F(1) has five subunits: alpha(3), beta(3), gamma(1), delta(1), epsilon(1). F(0) has three main subunits: a(1), b(2) and c(10-14). The alpha and beta chains form an alternating ring which encloses part of the gamma chain. F(1) is attached to F(0) by a central stalk formed by the gamma and epsilon chains, while a peripheral stalk is formed by the delta and b chains.

The protein resides in the cell inner membrane. Its function is as follows. F(1)F(0) ATP synthase produces ATP from ADP in the presence of a proton or sodium gradient. F-type ATPases consist of two structural domains, F(1) containing the extramembraneous catalytic core and F(0) containing the membrane proton channel, linked together by a central stalk and a peripheral stalk. During catalysis, ATP synthesis in the catalytic domain of F(1) is coupled via a rotary mechanism of the central stalk subunits to proton translocation. In terms of biological role, this protein is part of the stalk that links CF(0) to CF(1). It either transmits conformational changes from CF(0) to CF(1) or is implicated in proton conduction. This Acinetobacter baumannii (strain SDF) protein is ATP synthase subunit delta.